The chain runs to 99 residues: MALTKAEMAEHLFETLGLNKRVAKEMVESFFEEIREALESGEQVKLSGFGNFDLRDKNQRPGRNPKTGEDIPISARRVVTFRPGQKLKARVEAANSGKK.

A disordered region spans residues 49 to 71; sequence FGNFDLRDKNQRPGRNPKTGEDI.

This sequence belongs to the bacterial histone-like protein family. Heterodimer of an alpha and a beta chain.

Functionally, this protein is one of the two subunits of integration host factor, a specific DNA-binding protein that functions in genetic recombination as well as in transcriptional and translational control. This Shewanella denitrificans (strain OS217 / ATCC BAA-1090 / DSM 15013) protein is Integration host factor subunit alpha.